The chain runs to 590 residues: Shugoshin (590 aa).

The tract at residues 1–20 (MPKRKIAPNKESSRRTVSHD) is disordered. The span at 11-20 (ESSRRTVSHD) shows a compositional bias: basic and acidic residues. The stretch at 25-86 (QIQEFQNLMD…QENVTLRSKT (62 aa)) forms a coiled coil. 3 disordered regions span residues 133 to 235 (LRTM…QVEE), 291 to 337 (PSNP…HSMK), and 411 to 550 (RNRE…NSNI). A compositionally biased stretch (basic and acidic residues) spans 173 to 185 (SFNKDDGPDLEPK). A compositionally biased stretch (low complexity) spans 302 to 326 (PSATLPTTTSDASTVYPSSSSSTNS). Residues 328–337 (PKTKIKHSMK) are compositionally biased toward basic residues. The segment covering 448-459 (KKTEDEIHEDTA) has biased composition (basic and acidic residues). Over residues 513-526 (IVNNLSDENSTTRP) the composition is skewed to polar residues. Positions 527–550 (SKSSKGTSNNNNNYNNFDNNNSNI) are enriched in low complexity.

This sequence belongs to the shugoshin family. In terms of processing, ubiquitinated by the anaphase promoting complex (APC) at the onset of anaphase, conducting to its degradation.

The protein localises to the chromosome. It is found in the centromere. The protein resides in the kinetochore. It localises to the cytoplasm. Its subcellular location is the cytoskeleton. The protein localises to the spindle pole. Functionally, plays a central role in chromosome cohesion during mitosis and meiosis divisions by preventing premature dissociation of cohesin complex from centromeres after prophase, when most of cohesin complex dissociates from chromosomes arms. Probably act by protecting REC8 and RAD21 from separase degradation during anaphase. Also acts as a spindle checkpoint component required for sensing tension between sister chromatids during mitosis, its degradation when they separate preventing cell cycle arrest and chromosome loss in anaphase, a time when sister chromatids are no longer under tension. The protein is Shugoshin (SGO1) of Saccharomyces cerevisiae (strain ATCC 204508 / S288c) (Baker's yeast).